The sequence spans 308 residues: Maspardin (308 aa).

Positions 87-159 (FCDGFRKLLD…NSFWLMPAFM (73 aa)) constitute an AB hydrolase-1 domain.

Belongs to the AB hydrolase superfamily. Interacts with CD4. Interacts with ALDH16A1.

It is found in the cytoplasm. In terms of biological role, may play a role as a negative regulatory factor in CD4-dependent T-cell activation. In Macaca fascicularis (Crab-eating macaque), this protein is Maspardin (SPG21).